The sequence spans 369 residues: UDP-N-acetyl-3-dehydro-alpha-D-glucosamine 3-aminotranferase (369 aa).

Lys-190 is subject to N6-(pyridoxal phosphate)lysine.

The protein belongs to the DegT/DnrJ/EryC1 family. It depends on pyridoxal 5'-phosphate as a cofactor.

The enzyme catalyses UDP-2-acetamido-3-amino-2,3-dideoxy-alpha-D-glucopyranose + 2-oxoglutarate = UDP-2-acetamido-3-dehydro-2-deoxy-alpha-D-glucopyranose + L-glutamate. The protein operates within bacterial outer membrane biogenesis; LPS lipid A biosynthesis. In terms of biological role, aminotranferase involved in the synthesis of 2,3-diamino-2,3-dideoxy-D-glucopyranose (GlcN3N), which is a component of lipid A in some species. Catalyzes the amination of UDP-2-acetamido-3-dehydro-2-deoxy-alpha-D-glucopyranose (UDP-3-oxo-GlcNAc) to UDP-2-acetamido-3-amino-2,3-dideoxy-alpha-D-glucopyranose (UDP-GlcNAc3N), using L-glutamate as the amine donor. Other amine donors, such as alanine and glutamine, can substitute for glutamate, but product formation is slower. This is UDP-N-acetyl-3-dehydro-alpha-D-glucosamine 3-aminotranferase from Acidithiobacillus ferrooxidans (strain ATCC 23270 / DSM 14882 / CIP 104768 / NCIMB 8455) (Ferrobacillus ferrooxidans (strain ATCC 23270)).